An 816-amino-acid chain; its full sequence is MASSTSGIFFQGDDESQSFINSHLTSSYGNSSNSAPGCGGPTGGYHNLSMVSGDMHNPVMMSVSTPGPSAGASSLVTDANSGLSGGGPHLQRSASINNESYMRLPASPMSFSSNNISISGSSVVDGSTVVQRHDPSVQLGGSSATSLPTSQTNQIPLSMARRASESFFQDPNNLTQARKKPRLDSKQDDALQQQILRQWLQRQDILQQQQQQQQQGQNPQFQILLQQQKLRQQQQYLQSLPPLQRVQLQQQQQVQQQQQLQQQHQQQQQQLQQQGMQMQLTGGPRPYENSVCARRLMQYLYHQRQRPSESSIVYWRKFVTEYFSPRAKKRWCLSHYDNVGHSALGVSPQAATDEWQCDLCGSKSGRGFEATFDVLPRLNEIKFASGVLDELLYLGVPSERRYGSGIMVLEYGKAVQESVYEHIRVVREGHLRIIFSQELKILSWEFCTRRHEELLPRRLVAPQVNQLLQVAEKCQSTIDQSGSDGIHQQDLQANSNMVMAAGRQLAKSLESHSLNDLGFSKRYVRCLQISEVVSSMKDMIDFCRDQKVGPIEALKSYPYRMKAGKPQMQEMEQLAAARGLPPDRNSLNKLMALRNSGINIPMNNMSGQGSLPGSAQAAAFALTNYQSMLMKQNHLNSDLNNTTIQQEPSRNRSASPSYQGTSPLLPGFVHSPSISGVSSHLSPQRQMPSSSYNGSTQQYHQQPPSCSSGNQTLEQQMIHQIWQQMANSNGGSGQQQQSLSGQNMMNCNTNMGRNRTDYVPAAAETPSTSNRFRGIKGLDQSQNLEGIISNTSLNFGNNGVFSNEVDESMGGYSWKS.

Disordered stretches follow at residues His-133–Asn-153 and Ser-166–Asp-189. Composition is skewed to polar residues over residues Leu-139–Asn-153 and Ser-166–Gln-176. Positions Pro-307 to Leu-554 are dimerization. Positions Arg-316 to Arg-330 match the Nuclear localization signal motif. Polar residues-rich tracts occupy residues Ile-644 to Ser-662 and Pro-672 to Gln-711. Residues Ile-644–Gln-711 are disordered.

Belongs to the adn1/SEU family. Forms corepressor complexes with LUH; LUH is the transcription repressor subunit and SLK2 the specific DNA-binding adapters. In terms of tissue distribution, expressed in young flower meristems, ovules and the carpel margin meristem.

The protein resides in the nucleus. Its function is as follows. Probable transcription regulator that functions in the development of the carpel margin meristem similarly to SEUSS (SEU). In association with SEU, supports organ development from meristematic regions by facilitating auxin response and thus organ initiation, and by sustaining meristematic potential through the maintenance of PHABULOSA expression. DNA-binding adapter subunit of the SEU-SLK2 transcriptional corepressor of abiotic stress (e.g. salt and osmotic stress) response genes. The sequence is that of Probable transcriptional regulator SLK2 (SLK2) from Arabidopsis thaliana (Mouse-ear cress).